The chain runs to 503 residues: Anthranilate synthase component 1 3 (503 aa).

Position 269 to 271 (proline 269 to serine 271) interacts with L-tryptophan. Residue glycine 304–threonine 305 coordinates chorismate. A Mg(2+)-binding site is contributed by glutamate 331. Residues tyrosine 419, arginine 439, glycine 453 to glycine 455, and glycine 455 contribute to the chorismate site. Glutamate 468 contacts Mg(2+).

Belongs to the anthranilate synthase component I family. Tetramer of two components I and two components II. Mg(2+) serves as cofactor.

The catalysed reaction is chorismate + L-glutamine = anthranilate + pyruvate + L-glutamate + H(+). The protein operates within amino-acid biosynthesis; L-tryptophan biosynthesis; L-tryptophan from chorismate: step 1/5. This chain is Anthranilate synthase component 1 3 (trpE3), found in Haloarcula marismortui (strain ATCC 43049 / DSM 3752 / JCM 8966 / VKM B-1809) (Halobacterium marismortui).